Reading from the N-terminus, the 804-residue chain is Protein-lysine N-methyltransferase SMYD4 (804 aa).

An S-adenosyl-L-methionine-binding site is contributed by 112 to 114; the sequence is RSA. The 342-residue stretch at 233 to 574 folds into the SET domain; the sequence is SSIGLCVDPL…KGQEILHCYG (342 aa). Zn(2+) contacts are provided by Cys296, Cys299, Cys309, Cys312, Cys318, Cys322, His331, and Cys335. The MYND-type zinc-finger motif lies at 296–335; the sequence is CHRCLKHTLATVPCDGCSYAKYCSQECLQQAWELYHRTEC. Residues Asn427, 539 to 540, Tyr573, and Phe595 each bind S-adenosyl-L-methionine; that span reads NH.

Belongs to the class V-like SAM-binding methyltransferase superfamily. Interacts (via MYND-type zinc finger) with HDAC1.

The protein resides in the nucleus. The protein localises to the cytoplasm. The catalysed reaction is L-lysyl-[protein] + S-adenosyl-L-methionine = N(6)-methyl-L-lysyl-[protein] + S-adenosyl-L-homocysteine + H(+). Functionally, protein-lysine N-methyltransferase. Monomethylates PRMT5, modulating its transcriptional activity. May also act as a histone methyltransferase. Plays a critical role in cardiac development. Acts as a key epigenetic regulator of gene expression during cardiac development via its dual activities as a methyltransferase and negative regulator of HDAC1. This chain is Protein-lysine N-methyltransferase SMYD4, found in Homo sapiens (Human).